The primary structure comprises 213 residues: Orotate phosphoribosyltransferase (213 aa).

Lys26 lines the 5-phospho-alpha-D-ribose 1-diphosphate pocket. 34 to 35 (FF) contributes to the orotate binding site. 5-phospho-alpha-D-ribose 1-diphosphate is bound by residues 72–73 (YK), Arg99, Lys100, Lys103, His105, and 124–132 (DDVITAGTA). Positions 128 and 156 each coordinate orotate.

Belongs to the purine/pyrimidine phosphoribosyltransferase family. PyrE subfamily. Homodimer. Mg(2+) is required as a cofactor.

It carries out the reaction orotidine 5'-phosphate + diphosphate = orotate + 5-phospho-alpha-D-ribose 1-diphosphate. It functions in the pathway pyrimidine metabolism; UMP biosynthesis via de novo pathway; UMP from orotate: step 1/2. Functionally, catalyzes the transfer of a ribosyl phosphate group from 5-phosphoribose 1-diphosphate to orotate, leading to the formation of orotidine monophosphate (OMP). This Escherichia coli O139:H28 (strain E24377A / ETEC) protein is Orotate phosphoribosyltransferase.